The sequence spans 430 residues: Histidinol dehydrogenase (430 aa).

Positions 130, 191, and 214 each coordinate NAD(+). Positions 237, 259, and 262 each coordinate substrate. The Zn(2+) site is built by Gln259 and His262. Active-site proton acceptor residues include Glu327 and His328. The substrate site is built by His328, Asp361, Glu415, and His420. A Zn(2+)-binding site is contributed by Asp361. Position 420 (His420) interacts with Zn(2+).

It belongs to the histidinol dehydrogenase family. Zn(2+) is required as a cofactor.

It carries out the reaction L-histidinol + 2 NAD(+) + H2O = L-histidine + 2 NADH + 3 H(+). The protein operates within amino-acid biosynthesis; L-histidine biosynthesis; L-histidine from 5-phospho-alpha-D-ribose 1-diphosphate: step 9/9. In terms of biological role, catalyzes the sequential NAD-dependent oxidations of L-histidinol to L-histidinaldehyde and then to L-histidine. This is Histidinol dehydrogenase from Brucella suis biovar 1 (strain 1330).